Here is a 1218-residue protein sequence, read N- to C-terminus: Structural maintenance of chromosomes protein 2 (1218 aa).

Position 32–39 (32–39) interacts with ATP; that stretch reads GLNGSGKS. A coiled-coil region spans residues 209–517; that stretch reads VKLKKEKEEY…INSVKIDYKI (309 aa). The region spanning 525-654 is the SMC hinge domain; it reads DVLGQIYKLI…CSNVDLCKKI (130 aa). Coiled-coil stretches lie at residues 693–949 and 978–1045; these read LNYE…DTVK and RHDV…KKSE.

The protein belongs to the SMC family. SMC2 subfamily.

The protein localises to the nucleus. In terms of biological role, may play a role in the conversion of interphase chromatin into condensed chromosomes. The chain is Structural maintenance of chromosomes protein 2 from Plasmodium falciparum (isolate 3D7).